The sequence spans 64 residues: Large ribosomal subunit protein uL29 (64 aa).

Belongs to the universal ribosomal protein uL29 family.

The polypeptide is Large ribosomal subunit protein uL29 (Lacticaseibacillus paracasei (strain ATCC 334 / BCRC 17002 / CCUG 31169 / CIP 107868 / KCTC 3260 / NRRL B-441) (Lactobacillus paracasei)).